The sequence spans 137 residues: Sch210972 biosynthesis cluster protein E (137 aa).

The segment covering 1 to 12 (MTKYTSVNSSLP) has biased composition (polar residues). A disordered region spans residues 1 to 137 (MTKYTSVNSS…ASTIRPPCCG (137 aa)). Over residues 15 to 27 (PRQTTPTRPATQT) the composition is skewed to low complexity. Residues 51–71 (GSLNGSPTLRTTLDTSLSGTR) are compositionally biased toward polar residues. Residues 94-109 (DEDHPHDPGPDSDAKK) are compositionally biased toward basic and acidic residues.

Its pathway is secondary metabolite biosynthesis. In terms of biological role, part of the gene cluster that mediates the biosynthesis of the tetramic acid Sch210972, a potential anti-HIV fungal natural product that contains a decalin core. The PKS module of cghG together with the enoylreductase cghC catalyze the formation of the polyketide unit which is then conjugated to 4-hydroxyl-4-methyl glutamate (HMG) by the condensation domain of the cghG NRPS module. One unique structural feature of Sch210972 is the tetramic acid motif proposed to be derived from the non-proteinogenic amino acid HMG, by a Dieckmann-type condensation catalyzed by the reductase domain of cghG. The aldolase cghB catalyzes the aldol condensation of 2 molecules of pyruvic acid to yield the intermediate 4-hydroxyl-4-methyl-2-oxoglutarate (HMOG), which can then be stereoselectively transaminated by an unidentified enzyme to form HMG. The Diels-Alderase cghA then uses the Dieckmann product released by cghG as substrate and catalyzes the Diels-Alder cycloaddition to form the decalin ring of Sch210972. CghA also suppresses the nonenzymatic formation of the alternative stereoisomer. The sequence is that of Sch210972 biosynthesis cluster protein E from Chaetomium globosum (strain ATCC 6205 / CBS 148.51 / DSM 1962 / NBRC 6347 / NRRL 1970) (Soil fungus).